The following is a 282-amino-acid chain: Formamidopyrimidine-DNA glycosylase (282 aa).

Pro-2 serves as the catalytic Schiff-base intermediate with DNA. The active-site Proton donor is Glu-3. Lys-60 (proton donor; for beta-elimination activity) is an active-site residue. DNA-binding residues include His-99, Arg-118, and Lys-163. An FPG-type zinc finger spans residues 248-282; the sequence is WVYRRSGKNCKKCGEKILREKICGRSTHWCPNCQK. The active-site Proton donor; for delta-elimination activity is the Arg-272.

Belongs to the FPG family. Monomer. The cofactor is Zn(2+).

It catalyses the reaction Hydrolysis of DNA containing ring-opened 7-methylguanine residues, releasing 2,6-diamino-4-hydroxy-5-(N-methyl)formamidopyrimidine.. The enzyme catalyses 2'-deoxyribonucleotide-(2'-deoxyribose 5'-phosphate)-2'-deoxyribonucleotide-DNA = a 3'-end 2'-deoxyribonucleotide-(2,3-dehydro-2,3-deoxyribose 5'-phosphate)-DNA + a 5'-end 5'-phospho-2'-deoxyribonucleoside-DNA + H(+). Functionally, involved in base excision repair of DNA damaged by oxidation or by mutagenic agents. Acts as a DNA glycosylase that recognizes and removes damaged bases. Has a preference for oxidized purines, such as 7,8-dihydro-8-oxoguanine (8-oxoG). Has AP (apurinic/apyrimidinic) lyase activity and introduces nicks in the DNA strand. Cleaves the DNA backbone by beta-delta elimination to generate a single-strand break at the site of the removed base with both 3'- and 5'-phosphates. The chain is Formamidopyrimidine-DNA glycosylase from Prochlorococcus marinus (strain NATL2A).